Reading from the N-terminus, the 169-residue chain is MTATDYHCYSEFFQRQVLACFLTNPHYGSLINADGHAEVWTDWNDMSKFFQYGWRCNTNEDAYSNRTLMGNWNQERYDLKNIVQPKPLPSQFGHYFETTYDTSYNNRRPLSTHRFKREPHWFPGHQPELVPPPYKCTEKSTYMTSYSKPQTDHHSVCVWNPSNCQFQSP.

Mn regions lie at residues 98-109 (TTYDTSYNNRRP) and 139-149 (KSTYMTSYSKP).

Belongs to the CFAP68 family. In terms of assembly, microtubule inner protein component of sperm flagellar doublet microtubules.

It is found in the cytoplasm. It localises to the cytoskeleton. Its subcellular location is the cilium axoneme. The protein resides in the flagellum axoneme. The protein localises to the nucleus. It is found in the cell projection. It localises to the cilium. Functionally, microtubule inner protein (MIP) part of the dynein-decorated doublet microtubules (DMTs) in cilia axoneme, which is required for motile cilia beating. The sequence is that of Cilia- and flagella-associated protein 68 (CFAP68) from Bos taurus (Bovine).